We begin with the raw amino-acid sequence, 115 residues long: uncharacterized protein (115 aa).

This is an uncharacterized protein from Dictyostelium discoideum (Social amoeba).